Here is a 324-residue protein sequence, read N- to C-terminus: Nidogen-1 (324 aa).

Residues 16–178 (PFLADLDTTD…GVWVFEIGSP (163 aa)) enclose the NIDO domain. The N-linked (GlcNAc...) asparagine glycan is linked to N97. Residues Y200 and Y205 each carry the sulfotyrosine modification. The disordered stretch occupies residues 219–259 (TQPFPSHSPRRGYPDPHNVPRTLAPSYEATERPHGIPTERT). A compositionally biased stretch (basic and acidic residues) spans 247-259 (ATERPHGIPTERT). Residues 295-324 (SQQTCANNRHQCSVHAECRDYATGFCCRCV) enclose the EGF-like domain. 2 cysteine pairs are disulfide-bonded: C299/C312 and C306/C321.

Interacts with FBLN1. Interacts with LGALS3BP. Interacts with PLXDC1. Interacts with SVEP1. Post-translationally, N- and O-glycosylated.

It localises to the secreted. The protein localises to the extracellular space. The protein resides in the extracellular matrix. Its subcellular location is the basement membrane. Its function is as follows. Sulfated glycoprotein widely distributed in basement membranes and tightly associated with laminin. Also binds to collagen IV and perlecan. It probably has a role in cell-extracellular matrix interactions. This is Nidogen-1 (Nid1) from Rattus norvegicus (Rat).